Reading from the N-terminus, the 874-residue chain is GRB2-associated and regulator of MAPK protein 2 (874 aa).

The tract at residues 12-339 (RWSMGAFPLD…LLAGDPRVER (328 aa)) is CABIT. A compositionally biased stretch (gly residues) spans 188–206 (GGGGPASAGAAGGTGGGGA). Disordered stretches follow at residues 188–207 (GGGG…GGAR), 388–422 (PGLA…EPAA), 437–545 (GPEG…SPSP), 563–598 (GESS…AASL), and 625–742 (APFG…PSKA). 2 stretches are compositionally biased toward low complexity: residues 388–403 (PGLA…APAG) and 518–545 (SPSS…SPSP). Residues 575–585 (PSTTQPSQASR) are compositionally biased toward polar residues. 2 stretches are compositionally biased toward low complexity: residues 632-650 (PFSG…SSGP) and 658-691 (ATSG…SSSS). Ser735 is subject to Phosphoserine. Positions 807–871 (SALSLEEVSR…KIMQFIKGWR (65 aa)) constitute an SAM domain.

It belongs to the GAREM family.

Probable adapter protein that may provide a link between cell surface epidermal growth factor receptor and the MAPK/ERK signaling pathway. The protein is GRB2-associated and regulator of MAPK protein 2 (GAREM2) of Homo sapiens (Human).